Here is a 153-residue protein sequence, read N- to C-terminus: uncharacterized protein (153 aa).

The N-terminal stretch at methionine 1–alanine 21 is a signal peptide.

This is an uncharacterized protein from Saccharomyces cerevisiae (strain ATCC 204508 / S288c) (Baker's yeast).